The sequence spans 62 residues: Excisionase (62 aa).

The sequence is that of Excisionase (xis) from Streptomyces ambofaciens.